The chain runs to 392 residues: Phosphoglycerate kinase (392 aa).

Residues 21 to 23 (DFN), Arg36, 59 to 62 (HLGR), Arg118, and Arg151 each bind substrate. ATP contacts are provided by residues Lys201, Gly292, Glu323, and 349–352 (GGDS).

Belongs to the phosphoglycerate kinase family. In terms of assembly, monomer.

It is found in the cytoplasm. The catalysed reaction is (2R)-3-phosphoglycerate + ATP = (2R)-3-phospho-glyceroyl phosphate + ADP. It functions in the pathway carbohydrate degradation; glycolysis; pyruvate from D-glyceraldehyde 3-phosphate: step 2/5. The protein is Phosphoglycerate kinase of Borrelia duttonii (strain Ly).